The following is a 218-amino-acid chain: MSIGILGKKLGMSQFFDEQGKAVPVTLIEAGPCRITQLKSSETDGYQAVQIGFGEIREKLINKPAKGHLAKSGEDLVRHLCEYRVDDLDGIQLGGAVTVGDFAAGQKVDVSGDTMGRGFAGLQKRHGFSRGPMTHGSKNHRQPGSIGAGTTPGRIYPGKRMSGRYGGKKITTRGLTILKIDSERNLLVVKGSVPGKPGSLLNIRPANRVGAKPAKGGK.

The segment at 126–163 is disordered; that stretch reads HGFSRGPMTHGSKNHRQPGSIGAGTTPGRIYPGKRMSG.

Belongs to the universal ribosomal protein uL3 family. In terms of assembly, part of the 50S ribosomal subunit. Forms a cluster with proteins L14 and L19.

In terms of biological role, one of the primary rRNA binding proteins, it binds directly near the 3'-end of the 23S rRNA, where it nucleates assembly of the 50S subunit. This is Large ribosomal subunit protein uL3 from Synechococcus sp. (strain CC9311).